The primary structure comprises 101 residues: Small ribosomal subunit protein uS14 (101 aa).

It belongs to the universal ribosomal protein uS14 family. Part of the 30S ribosomal subunit. Contacts proteins S3 and S10.

In terms of biological role, binds 16S rRNA, required for the assembly of 30S particles and may also be responsible for determining the conformation of the 16S rRNA at the A site. The protein is Small ribosomal subunit protein uS14 of Chromobacterium violaceum (strain ATCC 12472 / DSM 30191 / JCM 1249 / CCUG 213 / NBRC 12614 / NCIMB 9131 / NCTC 9757 / MK).